Consider the following 424-residue polypeptide: GTPase HflX (424 aa).

The region spanning 194 to 364 (YTVALTGYTG…AVVEMLPEKV (171 aa)) is the Hflx-type G domain. Residues 200 to 207 (GYTGAGKT), 225 to 229 (FATLS), 246 to 249 (DTIG), 314 to 317 (NKID), and 342 to 344 (SAA) contribute to the GTP site. Mg(2+) contacts are provided by T207 and T227.

This sequence belongs to the TRAFAC class OBG-HflX-like GTPase superfamily. HflX GTPase family. Monomer. Associates with the 50S ribosomal subunit. Mg(2+) serves as cofactor.

It is found in the cytoplasm. GTPase that associates with the 50S ribosomal subunit and may have a role during protein synthesis or ribosome biogenesis. The chain is GTPase HflX from Thermofilum pendens (strain DSM 2475 / Hrk 5).